Reading from the N-terminus, the 743-residue chain is FHF complex subunit HOOK-interacting protein 2B (743 aa).

A disordered region spans residues 186-219 (CGEPTALPKDTTSHGDKDCSHDGAPARPQLDGES). Over residues 196-206 (TTSHGDKDCSH) the composition is skewed to basic and acidic residues.

It belongs to the FHIP family. In terms of tissue distribution, expressed in liver.

Its function is as follows. Able to activate MAPK/ERK and TGFB signaling pathways. May regulate the activity of genes involved in intestinal barrier function and immunoprotective inflammation. May play a role in cell proliferation. The chain is FHF complex subunit HOOK-interacting protein 2B from Homo sapiens (Human).